A 398-amino-acid chain; its full sequence is Acetate kinase 1 (398 aa).

Asn-9 contacts Mg(2+). Residue Lys-16 participates in ATP binding. Residue Arg-89 participates in substrate binding. The active-site Proton donor/acceptor is Asp-146. ATP is bound by residues 206–210 (HLGNG), 281–283 (DCR), and 329–333 (GIGEN). Glu-384 lines the Mg(2+) pocket.

This sequence belongs to the acetokinase family. As to quaternary structure, homodimer. Mg(2+) serves as cofactor. It depends on Mn(2+) as a cofactor.

It localises to the cytoplasm. It carries out the reaction acetate + ATP = acetyl phosphate + ADP. The protein operates within metabolic intermediate biosynthesis; acetyl-CoA biosynthesis; acetyl-CoA from acetate: step 1/2. Its function is as follows. Catalyzes the formation of acetyl phosphate from acetate and ATP. Can also catalyze the reverse reaction. The polypeptide is Acetate kinase 1 (Aliivibrio fischeri (strain ATCC 700601 / ES114) (Vibrio fischeri)).